The primary structure comprises 403 residues: Aurora kinase A (403 aa).

The interval 1–125 (MDRSKENCIS…SKQKNEESKK (125 aa)) is disordered. 2 stretches are compositionally biased toward polar residues: residues 27–83 (VTQQ…QATS) and 91–101 (PLNNTQKSKQP). S41 and S51 each carry phosphoserine. Basic and acidic residues predominate over residues 114–125 (LASKQKNEESKK). One can recognise a Protein kinase domain in the interval 133–383 (FEIGRPLGKG…LREVLEHPWI (251 aa)). Residues K143, K162, and 211-213 (EYA) each bind ATP. D256 (proton acceptor) is an active-site residue. K258 participates in a covalent cross-link: Glycyl lysine isopeptide (Lys-Gly) (interchain with G-Cter in SUMO2). ATP contacts are provided by residues 260–261 (EN) and D274. An activation segment region spans residues 280-293 (HAPSSRRTTLCGTL). 2 positions are modified to phosphothreonine: T287 and T288. S342 is subject to Phosphoserine; by PKA and PAK.

This sequence belongs to the protein kinase superfamily. Ser/Thr protein kinase family. Aurora subfamily. In terms of assembly, part of a complex composed of NEDD9, AURKA and CTTN; within the complex NEDD9 acts as a scaffold protein and is required for complex formation. Identified in a complex with AUNIP and NIN. Interacts with FBXL7. Interacts with CPEB1, JTB, TACC1, TPX2, PPP2CA, as well as with the protein phosphatase type 1 (PP1) isoforms PPP1CA, PPP1CB and PPP1CC. Also interacts with its substrates ARHGEF2, BORA, KIF2A, PARD3, and p53/TP53. Interaction with BORA promotes phosphorylation of PLK1. Interacts with CIMAP3. Interacts with GADD45A, competing with its oligomerization. Interacts (via C-terminus) with AUNIP (via C-terminus). Interacts with FRY; this interaction facilitates AURKA-mediated PLK1 phosphorylation. Interacts with SIRT2. Interacts with MYCN; interaction is phospho-independent and triggers AURKA activation; AURKA competes with FBXW7 for binding to unphosphorylated MYCN but not for binding to phosphorylated MYCN. Interacts with HNRNPU. Interacts with AAAS. Interacts with KLHL18 and CUL3. Interacts with FOXP1. Interacts with HDAC6; AURKA-mediated phosphorylation of HDAC6 promotes deacetylation of alpha-tubulin. In terms of processing, activated by phosphorylation at Thr-288; this brings about a change in the conformation of the activation segment. Phosphorylation at Thr-288 varies during the cell cycle and is highest during M phase. Autophosphorylated at Thr-288 upon TPX2 binding. Thr-288 can be phosphorylated by several kinases, including PAK and PKA. Protein phosphatase type 1 (PP1) binds AURKA and inhibits its activity by dephosphorylating Thr-288 during mitosis. Phosphorylation at Ser-342 decreases the kinase activity. PPP2CA controls degradation by dephosphorylating Ser-51 at the end of mitosis. Ubiquitinated by the E3 ubiquitin-protein ligase complex SCF(FBXL7) during mitosis, leading to its degradation by the proteasome. Ubiquitinated by CHFR, leading to its degradation by the proteasome. Ubiquitinated by the anaphase-promoting complex (APC), leading to its degradation by the proteasome. Ubiquitinated by the CUL3-KLHL18 ligase leading to its activation at the centrosome which is required for initiating mitotic entry. Ubiquitination mediated by CUL3-KLHL18 ligase does not lead to its degradation by the proteasome. In terms of tissue distribution, highly expressed in testis and weakly in skeletal muscle, thymus and spleen. Also highly expressed in colon, ovarian, prostate, neuroblastoma, breast and cervical cancer cell lines.

It is found in the cytoplasm. The protein resides in the cytoskeleton. The protein localises to the microtubule organizing center. Its subcellular location is the centrosome. It localises to the spindle pole. It is found in the centriole. The protein resides in the cell projection. The protein localises to the neuron projection. Its subcellular location is the cilium. It localises to the cilium basal body. It is found in the basolateral cell membrane. The catalysed reaction is L-seryl-[protein] + ATP = O-phospho-L-seryl-[protein] + ADP + H(+). The enzyme catalyses L-threonyl-[protein] + ATP = O-phospho-L-threonyl-[protein] + ADP + H(+). Activation of CDK1, appears to be an upstream event of AURKA activation. Phosphatase inhibitor-2 (PPP1R2) and TPX2 act also as activators. Inactivated by the G2 checkpoint. Inhibited by GADD45A and p53/TP53, and through dephosphorylation by protein phosphatase type 1 (PP1). MLN8054 is also a potent and selective inhibitor. Activated during the early phase of cilia disassembly in the presence of CIMAP3. Inhibited by the small molecule inhibitor VX-680. Functionally, mitotic serine/threonine kinase that contributes to the regulation of cell cycle progression. Associates with the centrosome and the spindle microtubules during mitosis and plays a critical role in various mitotic events including the establishment of mitotic spindle, centrosome duplication, centrosome separation as well as maturation, chromosomal alignment, spindle assembly checkpoint, and cytokinesis. Required for normal spindle positioning during mitosis and for the localization of NUMA1 and DCTN1 to the cell cortex during metaphase. Required for initial activation of CDK1 at centrosomes. Phosphorylates numerous target proteins, including ARHGEF2, BORA, BRCA1, CDC25B, DLGP5, HDAC6, KIF2A, LATS2, NDEL1, PARD3, PPP1R2, PLK1, RASSF1, TACC3, p53/TP53 and TPX2. Phosphorylates MCRS1 which is required for MCRS1-mediated kinetochore fiber assembly and mitotic progression. Regulates KIF2A tubulin depolymerase activity. Important for microtubule formation and/or stabilization. Required for normal axon formation. Plays a role in microtubule remodeling during neurite extension. Also acts as a key regulatory component of the p53/TP53 pathway, and particularly the checkpoint-response pathways critical for oncogenic transformation of cells, by phosphorylating and destabilizing p53/TP53. Phosphorylates its own inhibitors, the protein phosphatase type 1 (PP1) isoforms, to inhibit their activity. Inhibits cilia outgrowth. Required for cilia disassembly via phosphorylation of HDAC6 and subsequent deacetylation of alpha-tubulin. Regulates protein levels of the anti-apoptosis protein BIRC5 by suppressing the expression of the SCF(FBXL7) E3 ubiquitin-protein ligase substrate adapter FBXL7 through the phosphorylation of the transcription factor FOXP1. The chain is Aurora kinase A from Homo sapiens (Human).